A 206-amino-acid polypeptide reads, in one-letter code: Superoxide dismutase [Mn] (206 aa).

Mn(2+)-binding residues include histidine 27, histidine 82, aspartate 168, and histidine 172.

This sequence belongs to the iron/manganese superoxide dismutase family. In terms of assembly, homodimer. It depends on Mn(2+) as a cofactor.

It carries out the reaction 2 superoxide + 2 H(+) = H2O2 + O2. Its function is as follows. Destroys superoxide anion radicals which are normally produced within the cells and which are toxic to biological systems. The protein is Superoxide dismutase [Mn] (sodA) of Escherichia coli (strain K12).